The chain runs to 147 residues: Hemoglobin subunit beta-1 (147 aa).

The Globin domain maps to 3–147 (NLTAKERQLI…IADALGKGYH (145 aa)). Residues His-64 and His-93 each coordinate heme b.

Belongs to the globin family. In terms of assembly, heterotetramer of two alpha chains and two beta chains. In terms of tissue distribution, red blood cells.

Functionally, involved in oxygen transport from the lung to the various peripheral tissues. The sequence is that of Hemoglobin subunit beta-1 (hbb1) from Xenopus tropicalis (Western clawed frog).